The following is a 174-amino-acid chain: ATP-dependent protease subunit HslV (174 aa).

Thr-2 is a catalytic residue. Na(+) is bound by residues Gly-157, Cys-160, and Thr-163.

The protein belongs to the peptidase T1B family. HslV subfamily. In terms of assembly, a double ring-shaped homohexamer of HslV is capped on each side by a ring-shaped HslU homohexamer. The assembly of the HslU/HslV complex is dependent on binding of ATP.

Its subcellular location is the cytoplasm. It catalyses the reaction ATP-dependent cleavage of peptide bonds with broad specificity.. Allosterically activated by HslU binding. In terms of biological role, protease subunit of a proteasome-like degradation complex believed to be a general protein degrading machinery. In Shewanella halifaxensis (strain HAW-EB4), this protein is ATP-dependent protease subunit HslV.